We begin with the raw amino-acid sequence, 158 residues long: Transcription elongation factor GreA (158 aa).

The stretch at 45-72 forms a coiled coil; that stretch reads AEYHAAREQQSFIEGRIKQLEGELSHAE.

This sequence belongs to the GreA/GreB family.

In terms of biological role, necessary for efficient RNA polymerase transcription elongation past template-encoded arresting sites. The arresting sites in DNA have the property of trapping a certain fraction of elongating RNA polymerases that pass through, resulting in locked ternary complexes. Cleavage of the nascent transcript by cleavage factors such as GreA or GreB allows the resumption of elongation from the new 3'terminus. GreA releases sequences of 2 to 3 nucleotides. This is Transcription elongation factor GreA from Xylella fastidiosa (strain 9a5c).